Here is a 266-residue protein sequence, read N- to C-terminus: Killer cell lectin-like receptor 5 (266 aa).

The Cytoplasmic portion of the chain corresponds to 1 to 44; sequence MSEPEVTYSTVRLHKSSGLQRLVSHEEIQGPGEAGYRKCSVPWQ. Residues 45–66 form a helical; Signal-anchor for type II membrane protein membrane-spanning segment; that stretch reads LTVRSLGIFCFLLLVTVAVLAV. The Extracellular segment spans residues 67–266; sequence KIFQYSQHKQ…CGKKLDHFPG (200 aa). N-linked (GlcNAc...) asparagine glycans are attached at residues Asn87 and Asn104. In terms of domain architecture, C-type lectin spans 143–261; the sequence is GVKHWFCYGT…SYFCICGKKL (119 aa). 4 cysteine pairs are disulfide-bonded: Cys149–Cys154, Cys167–Cys255, Cys171–Cys257, and Cys236–Cys249. Asn250 carries N-linked (GlcNAc...) asparagine glycosylation.

Homodimer; disulfide-linked. Mostly expressed in NK cells, but also observed on NK T and memory T-cells.

It localises to the membrane. In terms of biological role, receptor on natural killer (NK) cells for class I MHC. The protein is Killer cell lectin-like receptor 5 (Klra5) of Mus musculus (Mouse).